A 644-amino-acid polypeptide reads, in one-letter code: Exoribonuclease 2 (644 aa).

The RNB domain maps to 189–516 (RQDLTALNFV…NHRLLKAVIK (328 aa)). Residues 561–643 (NTRFAAEIID…ETRSIIARPA (83 aa)) enclose the S1 motif domain.

This sequence belongs to the RNR ribonuclease family. RNase II subfamily.

Its subcellular location is the cytoplasm. It carries out the reaction Exonucleolytic cleavage in the 3'- to 5'-direction to yield nucleoside 5'-phosphates.. Involved in mRNA degradation. Hydrolyzes single-stranded polyribonucleotides processively in the 3' to 5' direction. The sequence is that of Exoribonuclease 2 from Salmonella enteritidis PT4 (strain P125109).